The sequence spans 542 residues: Chitinase 2 (542 aa).

An N-terminal signal peptide occupies residues 1–22 (MLTRTFLGMAISAFLASTGVQA). The 286-residue stretch at 29-314 (PNVMYYWGQN…SQLYSLVHSG (286 aa)) folds into the GH18 domain. The active-site Proton donor is Glu166. A disordered region spans residues 312–356 (HSGGSTPPPPSSSSATKTTTKTTATSTKTTTTTAPTATSTPGSCP). Residues 323 to 354 (SSSATKTTTKTTATSTKTTTTTAPTATSTPGS) are compositionally biased toward low complexity. The chitin-binding, high affinity stretch occupies residues 355–406 (CPVANQPCSTQNQYACTADGKYAVCDHGKWVASSCPSNTVCIPTTDGASIYC). The propeptide occupies 447–542 (AQLAVTSTDK…APSTSAWNFK (96 aa)).

It belongs to the glycosyl hydrolase 18 family. Chitinase class III subfamily. In terms of assembly, monomer. O-glycosylated.

The protein resides in the secreted. It catalyses the reaction Random endo-hydrolysis of N-acetyl-beta-D-glucosaminide (1-&gt;4)-beta-linkages in chitin and chitodextrins.. Functionally, probably involved in the apical growth and branching of fungal hyphae. The polypeptide is Chitinase 2 (CHI2) (Rhizopus oligosporus (Rhizopus microsporus var. oligosporus)).